The sequence spans 865 residues: DNA topoisomerase 1 (865 aa).

Residues 3-142 (KALVIVESPA…RYSRVVFNEI (140 aa)) enclose the Toprim domain. Glu-9 serves as a coordination point for Mg(2+). The segment at 37-65 (LPTSGSAAKKSADSTSTKTAKKPKKDERG) is disordered. A compositionally biased stretch (low complexity) spans 39–54 (TSGSAAKKSADSTSTK). Asp-111 is a Mg(2+) binding site. Residues 158–575 (NINRVNAQQA…NFFSDFTQQL (418 aa)) form the Topo IA-type catalytic domain. The interval 192 to 197 (SAGRVQ) is interaction with DNA. The active-site O-(5'-phospho-DNA)-tyrosine intermediate is Tyr-319. 3 C4-type zinc fingers span residues 599 to 630 (CPTC…KERC), 662 to 689 (CQKC…NPTC), and 711 to 736 (CEKC…NDEC).

This sequence belongs to the type IA topoisomerase family. In terms of assembly, monomer. Mg(2+) serves as cofactor.

It catalyses the reaction ATP-independent breakage of single-stranded DNA, followed by passage and rejoining.. In terms of biological role, releases the supercoiling and torsional tension of DNA, which is introduced during the DNA replication and transcription, by transiently cleaving and rejoining one strand of the DNA duplex. Introduces a single-strand break via transesterification at a target site in duplex DNA. The scissile phosphodiester is attacked by the catalytic tyrosine of the enzyme, resulting in the formation of a DNA-(5'-phosphotyrosyl)-enzyme intermediate and the expulsion of a 3'-OH DNA strand. The free DNA strand then undergoes passage around the unbroken strand, thus removing DNA supercoils. Finally, in the religation step, the DNA 3'-OH attacks the covalent intermediate to expel the active-site tyrosine and restore the DNA phosphodiester backbone. The sequence is that of DNA topoisomerase 1 from Salmonella typhimurium (strain LT2 / SGSC1412 / ATCC 700720).